A 558-amino-acid chain; its full sequence is Phosphatidylserine lipase ABHD16A (558 aa).

2 consecutive transmembrane segments (helical) span residues 60 to 80 and 93 to 113; these read ILALASVFWSISYYSSPFAFF and VVPFSHYAGTLLLLLAGVACL. Residues 114–558 are Cytoplasmic-facing; that stretch reads RGIGRWTNPQ…AQNFQMPWHL (445 aa). The region spanning 281–407 is the AB hydrolase-1 domain; it reads LVICCEGNAG…LVTRTVRQHL (127 aa). Residues Ser355, Asp430, and His507 each act as charge relay system in the active site.

The protein belongs to the AB hydrolase superfamily. ABHD16 family.

Its subcellular location is the membrane. It catalyses the reaction 1-heptadecanoyl-2-(5Z,8Z,11Z,14Z-eicosatetraenoyl)-sn-glycero-3-phosphoserine + H2O = 1-heptadecanoyl-sn-glycero-3-phosphoserine + (5Z,8Z,11Z,14Z)-eicosatetraenoate + H(+). The catalysed reaction is 1-hexadecanoyl-2-(9Z-octadecenoyl)-sn-glycero-3-phospho-L-serine + H2O = 1-hexadecanoyl-sn-glycero-3-phospho-L-serine + (9Z)-octadecenoate + H(+). The enzyme catalyses 1-octadecanoyl-2-(9Z,12Z-octadecadienoyl)-sn-glycero-3-phosphoserine + H2O = 1-octadecanoyl-sn-glycero-3-phosphoserine + (9Z,12Z)-octadecadienoate + H(+). It carries out the reaction 1-heptadecanoyl-2-(5Z,8Z,11Z,14Z-eicosatetraenoyl)-sn-glycero-3-phosphocholine + H2O = 1-heptadecanoyl-sn-glycero-3-phosphocholine + (5Z,8Z,11Z,14Z)-eicosatetraenoate + H(+). It catalyses the reaction 1-hexadecanoyl-2-(9Z-octadecenoyl)-sn-glycero-3-phosphoglycerol + H2O = 1-hexadecanoyl-sn-glycero-3-phosphoglycerol + (9Z)-octadecenoate + H(+). The catalysed reaction is 1-hexadecanoyl-2-(9Z-octadecenoyl)-sn-glycero-3-phospho-(1D-myo-inositol) + H2O = 1-hexadecanoyl-sn-glycero-3-phospho-(1D-myo-inositol) + (9Z)-octadecenoate + H(+). The enzyme catalyses 1-heptadecanoyl-2-(5Z,8Z,11Z,14Z-eicosatetraenoyl)-sn-glycero-3-phosphoethanolamine + H2O = 1-heptadecanoyl-sn-glycero-3-phosphoethanolamine + (5Z,8Z,11Z,14Z)-eicosatetraenoate + H(+). It carries out the reaction 1-hexadecanoyl-2-(9Z-octadecenoyl)-sn-glycero-3-phospho-(1'-sn-glycerol) + H2O = 1-hexadecanoyl-sn-glycero-3-phospho-(1'-sn-glycerol) + (9Z)-octadecenoate + H(+). It catalyses the reaction Hydrolyzes glycerol monoesters of long-chain fatty acids.. The catalysed reaction is 1-tetradecanoylglycerol + H2O = tetradecanoate + glycerol + H(+). The enzyme catalyses 2-hexadecanoylglycerol + H2O = glycerol + hexadecanoate + H(+). It carries out the reaction 1-(9Z-octadecenoyl)-glycerol + H2O = glycerol + (9Z)-octadecenoate + H(+). It catalyses the reaction 2-(9Z-octadecenoyl)-glycerol + H2O = glycerol + (9Z)-octadecenoate + H(+). The catalysed reaction is 2-(9Z,12Z-octadecadienoyl)-glycerol + H2O = (9Z,12Z)-octadecadienoate + glycerol + H(+). The enzyme catalyses 1-(5Z,8Z,11Z,14Z-eicosatetraenoyl)-glycerol + H2O = glycerol + (5Z,8Z,11Z,14Z)-eicosatetraenoate + H(+). It carries out the reaction 2-(5Z,8Z,11Z,14Z-eicosatetraenoyl)-glycerol + H2O = glycerol + (5Z,8Z,11Z,14Z)-eicosatetraenoate + H(+). It catalyses the reaction prostaglandin D2-1-glycerol ester + H2O = prostaglandin D2 + glycerol + H(+). The catalysed reaction is 2-glyceryl-15-deoxy-Delta(12,14)-prostaglandin J2 + H2O = 15-deoxy-Delta(12,14)-prostaglandin J2 + glycerol + H(+). The enzyme catalyses 1-(9Z,12Z-octadecadienoyl)-glycerol + H2O = (9Z,12Z)-octadecadienoate + glycerol + H(+). Its activity is regulated as follows. Inhibited by beta-lactone-based lipid inhibitors, such as beta-lactone palmostatin-B. In terms of biological role, phosphatidylserine (PS) lipase that mediates the hydrolysis of phosphatidylserine to generate lysophosphatidylserine (LPS). LPS constitutes a class of signaling lipids that regulates immunological and neurological processes. Has no activity towards diacylglycerol, triacylglycerol or lysophosphatidylserine lipase. Also has monoacylglycerol lipase activity, with preference for 1-(9Z,12Z-octadecadienoyl)-glycerol (1-LG) and 2-glyceryl-15-deoxy-Delta(12,14)-prostaglandin J2 (15d-PGJ(2)-G). This is Phosphatidylserine lipase ABHD16A from Homo sapiens (Human).